The chain runs to 152 residues: MRLWFCLSLFIVLCLEHFPGTLADERNVPESEEKTEQFLRDLPKINRKGPRPPGFSPFRGKFHSQTLRDLPKINRKGPRPPGFSPFRGKFHSQTLRDLPKINRKGPRPPGFSPFRGKFHSQSLRDLPKINRKGPRPPGFSPFRGKFHSQSHV.

An N-terminal signal peptide occupies residues 1 to 23; the sequence is MRLWFCLSLFIVLCLEHFPGTLA. Residues 28–44 are compositionally biased toward basic and acidic residues; the sequence is VPESEEKTEQFLRDLPK. Residues 28–152 form a disordered region; sequence VPESEEKTEQ…RGKFHSQSHV (125 aa).

It belongs to the bradykinin-related peptide family. In terms of tissue distribution, expressed by the skin glands.

It is found in the secreted. Functionally, potent vasodilator. Binds B1 (BDKRB1) and B2 (BDKRB2) bradykinin receptors. This is Kininogen-1c from Bombina maxima (Giant fire-bellied toad).